Here is a 601-residue protein sequence, read N- to C-terminus: Glutathione-regulated potassium-efflux system protein KefB (601 aa).

13 helical membrane passes run 5 to 25, 29 to 49, 55 to 75, 87 to 107, 115 to 135, 152 to 172, 180 to 202, 207 to 227, 230 to 250, 268 to 288, 291 to 311, 324 to 344, and 356 to 376; these read SLLM…PLAA, IGAV…GLGF, EILH…GLEL, IFGV…GLLW, AAII…LQLM, VLLF…LLAG, WMKL…YLLR, FIAA…LVLG, LFME…GILL, GLLL…GVLY, ILEI…VLYL, LQFS…FSAA, and PLLL…MQGV. An RCK N-terminal domain is found at 400-519; the sequence is KPQVIVVGFG…AGVTQFSRET (120 aa).

Belongs to the monovalent cation:proton antiporter 2 (CPA2) transporter (TC 2.A.37) family. KefB subfamily. Interacts with the regulatory subunit KefG.

Its subcellular location is the cell inner membrane. Functionally, pore-forming subunit of a potassium efflux system that confers protection against electrophiles. Catalyzes K(+)/H(+) antiport. This Erwinia tasmaniensis (strain DSM 17950 / CFBP 7177 / CIP 109463 / NCPPB 4357 / Et1/99) protein is Glutathione-regulated potassium-efflux system protein KefB.